Here is a 348-residue protein sequence, read N- to C-terminus: Protein-glutamate methylesterase/protein-glutamine glutaminase 2 (348 aa).

The region spanning 5–122 (KVLIIDDSAL…DLGLSQYRDE (118 aa)) is the Response regulatory domain. A 4-aspartylphosphate modification is found at D56. The region spanning 157–348 (SLKTGFLCAI…AANIIKHALK (192 aa)) is the CheB-type methylesterase domain. Catalysis depends on residues S169, H195, and D291.

This sequence belongs to the CheB family. In terms of processing, phosphorylated by CheA. Phosphorylation of the N-terminal regulatory domain activates the methylesterase activity.

It localises to the cytoplasm. The enzyme catalyses [protein]-L-glutamate 5-O-methyl ester + H2O = L-glutamyl-[protein] + methanol + H(+). The catalysed reaction is L-glutaminyl-[protein] + H2O = L-glutamyl-[protein] + NH4(+). In terms of biological role, involved in chemotaxis. Part of a chemotaxis signal transduction system that modulates chemotaxis in response to various stimuli. Catalyzes the demethylation of specific methylglutamate residues introduced into the chemoreceptors (methyl-accepting chemotaxis proteins or MCP) by CheR. Also mediates the irreversible deamidation of specific glutamine residues to glutamic acid. In Saccharophagus degradans (strain 2-40 / ATCC 43961 / DSM 17024), this protein is Protein-glutamate methylesterase/protein-glutamine glutaminase 2.